The primary structure comprises 992 residues: Disks large-associated protein 4 (992 aa).

Residues 1 to 20 are compositionally biased toward basic and acidic residues; sequence MKGLGDSRPRHLSDSLDPPH. Disordered regions lie at residues 1 to 31 and 157 to 225; these read MKGLGDSRPRHLSDSLDPPHEPLFAGPDRNP and MEGT…PASG. A compositionally biased stretch (gly residues) spans 162 to 171; that stretch reads GKVGGNGSKK. A compositionally biased stretch (basic and acidic residues) spans 172–194; that stretch reads GGLEDGKGRRAKSKERAKAGEPK. Polar residues predominate over residues 199–208; it reads SNISGWWSSD. Phosphoserine is present on residues Ser-206 and Ser-207. Omega-N-methylarginine is present on Arg-290. A disordered region spans residues 342–396; it reads TTLLSPRDMDSTAEGPIPCRRMRSGSYIKAMGDEDSDESGGGSPKPSPKTAARRQ. 7 positions are modified to phosphoserine: Ser-377, Ser-380, Ser-384, Ser-388, Ser-405, Ser-415, and Ser-421. Disordered stretches follow at residues 527–751, 763–798, and 915–992; these read SVSL…GPRQ, SYGDNSDPALEASSLPPPDPWLETSSSSPAEPAQPG, and TPEK…QTRL. Over residues 528 to 554 the composition is skewed to low complexity; the sequence is VSLQSLSPPPSTGSLSNSRTLPSSSCL. The segment covering 576–591 has biased composition (polar residues); sequence VTVQSSTESAQDTYLD. Residues Ser-580, Ser-581, Ser-609, Ser-611, Ser-665, and Ser-744 each carry the phosphoserine modification. Positions 600–620 are enriched in low complexity; that stretch reads TSQSGLSNSSDSLDSSTRPPS. Thr-915 is subject to Phosphothreonine. 2 stretches are compositionally biased toward basic and acidic residues: residues 915–925 and 940–958; these read TPEKRKEEKKP and VSRDKASDAGDKQRQEARK. Over residues 969–978 the composition is skewed to polar residues; sequence VRQNSATESA. Ser-973 carries the post-translational modification Phosphoserine.

Belongs to the SAPAP family. Interacts with DLG1 and DLG4/PSD-95.

Its subcellular location is the membrane. Its function is as follows. May play a role in the molecular organization of synapses and neuronal cell signaling. Could be an adapter protein linking ion channel to the subsynaptic cytoskeleton. May induce enrichment of PSD-95/SAP90 at the plasma membrane. This is Disks large-associated protein 4 (Dlgap4) from Mus musculus (Mouse).